Here is a 543-residue protein sequence, read N- to C-terminus: Hydroxylamine reductase (543 aa).

The [4Fe-4S] cluster site is built by C5, C8, C17, and C23. The hybrid [4Fe-2O-2S] cluster site is built by H236, E260, C304, C398, C426, C451, E486, and K488. C398 bears the Cysteine persulfide mark.

Belongs to the HCP family. Requires [4Fe-4S] cluster as cofactor. Hybrid [4Fe-2O-2S] cluster serves as cofactor.

Its subcellular location is the cytoplasm. The catalysed reaction is A + NH4(+) + H2O = hydroxylamine + AH2 + H(+). In terms of biological role, catalyzes the reduction of hydroxylamine to form NH(3) and H(2)O. The polypeptide is Hydroxylamine reductase (Bacteroides thetaiotaomicron (strain ATCC 29148 / DSM 2079 / JCM 5827 / CCUG 10774 / NCTC 10582 / VPI-5482 / E50)).